The following is a 248-amino-acid chain: 2,3-bisphosphoglycerate-dependent phosphoglycerate mutase (248 aa).

Residues 8–15 (RHGESTWN), 21–22 (TG), arginine 60, 87–90 (ERHY), lysine 98, 114–115 (RR), and 183–184 (GN) each bind substrate. Histidine 9 serves as the catalytic Tele-phosphohistidine intermediate. Glutamate 87 (proton donor/acceptor) is an active-site residue.

Belongs to the phosphoglycerate mutase family. BPG-dependent PGAM subfamily. Homodimer.

The enzyme catalyses (2R)-2-phosphoglycerate = (2R)-3-phosphoglycerate. It participates in carbohydrate degradation; glycolysis; pyruvate from D-glyceraldehyde 3-phosphate: step 3/5. In terms of biological role, catalyzes the interconversion of 2-phosphoglycerate and 3-phosphoglycerate. In Ralstonia nicotianae (strain ATCC BAA-1114 / GMI1000) (Ralstonia solanacearum), this protein is 2,3-bisphosphoglycerate-dependent phosphoglycerate mutase.